The chain runs to 186 residues: Akirin-1A (186 aa).

Residues 14–65 (EALMSPQSPKRRRCAPLPGSPATPSPQRCAIRPEMQQGQQQPLSQLGGDRRL) form a disordered region. The span at 49–60 (QQGQQQPLSQLG) shows a compositional bias: low complexity. The short motif at 183 to 186 (SYVS) is the SYVS motif element.

Belongs to the akirin family.

It localises to the nucleus. In terms of biological role, molecular adapter that acts as a bridge between proteins, and which is involved skeletal muscle development. Functions as a signal transducer for MSTN during skeletal muscle regeneration and myogenesis. The protein is Akirin-1A (akirin1-a) of Xenopus laevis (African clawed frog).